We begin with the raw amino-acid sequence, 300 residues long: Ribosomal protein bS6--L-glutamate ligase (300 aa).

The ATP-grasp domain maps to 104 to 287 (MQLLARQGID…IAGKMIRWIE (184 aa)). ATP is bound by residues lysine 141, 178-179 (EY), aspartate 187, and 211-213 (RSN). Positions 248, 260, and 262 each coordinate Mg(2+). Mn(2+)-binding residues include aspartate 248, glutamate 260, and asparagine 262.

Belongs to the RimK family. Requires Mg(2+) as cofactor. Mn(2+) is required as a cofactor.

Its function is as follows. An L-glutamate ligase that catalyzes the ATP-dependent post-translational addition of glutamate residues to the C-terminus of ribosomal protein bS6 (RpsF). Is also able to catalyze the synthesis of poly-alpha-glutamate in vitro, via ATP hydrolysis from unprotected glutamate as substrate. The number of glutamate residues added to either RpsF or to poly-alpha-glutamate changes with pH. The chain is Ribosomal protein bS6--L-glutamate ligase from Escherichia coli O139:H28 (strain E24377A / ETEC).